Here is a 607-residue protein sequence, read N- to C-terminus: UvrABC system protein C (607 aa).

The GIY-YIG domain maps to 15–93 (SEPGVYCMLD…IKKYQPRYNI (79 aa)). Positions 202–237 (HEVIADLIKKMEAASQQLNFELAAKVRDQIMLLRKM) constitute a UVR domain.

Belongs to the UvrC family. As to quaternary structure, interacts with UvrB in an incision complex.

It localises to the cytoplasm. In terms of biological role, the UvrABC repair system catalyzes the recognition and processing of DNA lesions. UvrC both incises the 5' and 3' sides of the lesion. The N-terminal half is responsible for the 3' incision and the C-terminal half is responsible for the 5' incision. The chain is UvrABC system protein C from Pseudoalteromonas translucida (strain TAC 125).